We begin with the raw amino-acid sequence, 867 residues long: Pentatricopeptide repeat-containing protein At2g39230, mitochondrial (867 aa).

The transit peptide at 1 to 49 (MTTFMVSKRFRPPIFLHRFINPKPISSQTRFLHPPDNQSRDISDSTTET) directs the protein to the mitochondrion. The tract at residues 27–74 (SQTRFLHPPDNQSRDISDSTTETISTLEFPHKTSVPNHSPLTSTSETE) is disordered. Over residues 60–72 (SVPNHSPLTSTSE) the composition is skewed to polar residues. PPR repeat units lie at residues 168–202 (TPRAFNYLLNAYIRNKRMDYAVDCFGLMVDRKVVP), 203–237 (FVPYVNNVLSSLVRSNLIDEAKEIYNKMVLIGVAG), 238–272 (DNVTTQLLMRASLRERKPEEAVKIFRRVMSRGAEP), 273–307 (DGLLFSLAVQAACKTPDLVMALDLLREMRGKLGVP), 309–343 (SQETYTSVIVAFVKEGNMEEAVRVMDEMVGFGIPM), 344–378 (SVIAATSLVNGYCKGNELGKALDLFNRMEEEGLAP), 379–413 (DKVMFSVMVEWFCKNMEMEKAIEFYMRMKSVRIAP), 414–444 (SSVLVHTMIQGCLKAESPEAALEIFNDSFES), 448–482 (HGFMCNKIFLLFCKQGKVDAATSFLKMMEQKGIEP), 483–517 (NVVFYNNMMLAHCRMKNMDLARSIFSEMLEKGLEP), 518–552 (NNFTYSILIDGFFKNKDEQNAWDVINQMNASNFEA), 553–588 (NEVIYNTIINGLCKVGQTSKAKEMLQNLIKEKRYSM), 589–623 (SCTSYNSIIDGFVKVGDTDSAVETYREMSENGKSP), 624–658 (NVVTFTSLINGFCKSNRMDLALEMTHEMKSMELKL), 659–693 (DLPAYGALIDGFCKKNDMKTAYTLFSELPELGLMP), 694–728 (NVSVYNSLISGFRNLGKMDAAIDLYKKMVNDGISC), 729–763 (DLFTYTTMIDGLLKDGNINLASDLYSELLDLGIVP), 764–798 (DEILHMVLVNGLSKKGQFLKASKMLEEMKKKDVTP), and 799–833 (NVLLYSTVIAGHHREGNLNEAFRLHDEMLEKGIVH).

It belongs to the PPR family. P subfamily. In terms of tissue distribution, expressed in lateral organ junctions and shoot apical meristem (SAM).

It localises to the mitochondrion. Involved in lateral organ development and boundary demarcation. The protein is Pentatricopeptide repeat-containing protein At2g39230, mitochondrial (LOJ) of Arabidopsis thaliana (Mouse-ear cress).